We begin with the raw amino-acid sequence, 545 residues long: Chaperonin GroEL (545 aa).

ATP is bound by residues 30-33 (TLGP), K51, 87-91 (DGTTT), G415, and D496. The disordered stretch occupies residues 526–545 (PEPKAPAGGMPDMGGMGGMM). The span at 536-545 (PDMGGMGGMM) shows a compositional bias: gly residues.

Belongs to the chaperonin (HSP60) family. In terms of assembly, forms a cylinder of 14 subunits composed of two heptameric rings stacked back-to-back. Interacts with the co-chaperonin GroES.

Its subcellular location is the cytoplasm. It catalyses the reaction ATP + H2O + a folded polypeptide = ADP + phosphate + an unfolded polypeptide.. In terms of biological role, together with its co-chaperonin GroES, plays an essential role in assisting protein folding. The GroEL-GroES system forms a nano-cage that allows encapsulation of the non-native substrate proteins and provides a physical environment optimized to promote and accelerate protein folding. The polypeptide is Chaperonin GroEL (Paracoccus denitrificans (strain Pd 1222)).